A 226-amino-acid chain; its full sequence is MPARLDARATRRYFDSAFNSPAVKILPNEYYVTNGEDVMLSTVLGSCVAACIHDPVIGVGGMNHFMLPEGDIHSPASATMRYGAFAMEVLINELLKAGAVRERLEAKVFGGGAVLSAMQLMNIGERNGQFVLNYLKTEGIPVRAQDLGDVHARRINYFPRDGRVMVRKMAPHHQKAEALIAQREAAAAQTVQAETRAAPRVERFARPGGMRVERFDTPSRRDPVGA.

The segment at 207-226 is disordered; sequence PGGMRVERFDTPSRRDPVGA.

The protein belongs to the CheD family.

The enzyme catalyses L-glutaminyl-[protein] + H2O = L-glutamyl-[protein] + NH4(+). Probably deamidates glutamine residues to glutamate on methyl-accepting chemotaxis receptors (MCPs), playing an important role in chemotaxis. The chain is Probable chemoreceptor glutamine deamidase CheD from Bordetella bronchiseptica (strain ATCC BAA-588 / NCTC 13252 / RB50) (Alcaligenes bronchisepticus).